The chain runs to 286 residues: CDP-diacylglycerol--serine O-phosphatidyltransferase (286 aa).

The next 6 membrane-spanning stretches (helical) occupy residues 15-35 (ILPS…IKFA), 74-94 (IDSL…LYVS), 95-115 (MLSK…CVVL), 135-155 (EFFV…LLAL), 167-187 (GWFL…GIPM), and 207-227 (LAIC…VIII).

Belongs to the CDP-alcohol phosphatidyltransferase class-I family.

The protein resides in the cell membrane. It catalyses the reaction a CDP-1,2-diacyl-sn-glycerol + L-serine = a 1,2-diacyl-sn-glycero-3-phospho-L-serine + CMP + H(+). In Mycobacterium tuberculosis (strain ATCC 25618 / H37Rv), this protein is CDP-diacylglycerol--serine O-phosphatidyltransferase (pssA).